Consider the following 286-residue polypeptide: 4-hydroxybenzoate octaprenyltransferase (286 aa).

8 helical membrane passes run 20 to 40 (IGTL…AGGM), 43 to 63 (LKVL…GCII), 96 to 116 (LFVI…GLVV), 142 to 162 (FLGV…TGEV), 167 to 187 (WWLF…YAMV), 210 to 230 (QIIG…GWSA), 235 to 255 (VYGL…MLIF), and 266 to 286 (FLNN…DYLF).

The protein belongs to the UbiA prenyltransferase family. Mg(2+) serves as cofactor.

It localises to the cell inner membrane. The enzyme catalyses all-trans-octaprenyl diphosphate + 4-hydroxybenzoate = 4-hydroxy-3-(all-trans-octaprenyl)benzoate + diphosphate. It participates in cofactor biosynthesis; ubiquinone biosynthesis. Catalyzes the prenylation of para-hydroxybenzoate (PHB) with an all-trans polyprenyl group. Mediates the second step in the final reaction sequence of ubiquinone-8 (UQ-8) biosynthesis, which is the condensation of the polyisoprenoid side chain with PHB, generating the first membrane-bound Q intermediate 3-octaprenyl-4-hydroxybenzoate. This is 4-hydroxybenzoate octaprenyltransferase from Shewanella oneidensis (strain ATCC 700550 / JCM 31522 / CIP 106686 / LMG 19005 / NCIMB 14063 / MR-1).